Reading from the N-terminus, the 501-residue chain is Cytochrome P450 2J4 (501 aa).

The next 2 membrane-spanning stretches (helical) occupy residues Ile12–Ala32 and Asn77–Ile97. Cys447 serves as a coordination point for heme.

This sequence belongs to the cytochrome P450 family. Requires heme as cofactor. As to expression, expressed in small intestinal enterocytes (at protein level). In the intestinal crypt, expressed at higher levels in the mature villous cells than in undifferentiated crypt cells (at protein level). Expressed in liver, kidney, lung, and olfactory mucosa (at protein level).

Its subcellular location is the endoplasmic reticulum membrane. The protein localises to the microsome membrane. The enzyme catalyses an organic molecule + reduced [NADPH--hemoprotein reductase] + O2 = an alcohol + oxidized [NADPH--hemoprotein reductase] + H2O + H(+). The catalysed reaction is (5Z,8Z,11Z,14Z)-eicosatetraenoate + reduced [NADPH--hemoprotein reductase] + O2 = 19-hydroxy-(5Z,8Z,11Z,14Z)-eicosatetraenoate + oxidized [NADPH--hemoprotein reductase] + H2O + H(+). It catalyses the reaction all-trans-retinal + reduced [NADPH--hemoprotein reductase] + O2 = all-trans-retinoate + oxidized [NADPH--hemoprotein reductase] + H2O + 2 H(+). It carries out the reaction 9-cis-retinal + reduced [NADPH--hemoprotein reductase] + O2 = 9-cis-retinoate + oxidized [NADPH--hemoprotein reductase] + H2O + 2 H(+). It participates in lipid metabolism; arachidonate metabolism. Its pathway is cofactor metabolism; retinol metabolism. In terms of biological role, a cytochrome P450 monooxygenase that may play a major role in intestinal retinoid metabolism. Catalyzes the oxidative transformation of all-trans retinal and 9-cis-retinal to the corresponding active forms all-trans and 9-cis retinoic acids. Catalyzes the hydroxylation of carbon-hydrogen bonds. Hydroxylates arachidonic acid predominantly at the omega-1 position. Mechanistically, uses molecular oxygen inserting one oxygen atom into a substrate, and reducing the second into a water molecule, with two electrons provided by NADPH via cytochrome P450 reductase (CPR; NADPH--hemoprotein reductase). The chain is Cytochrome P450 2J4 from Rattus norvegicus (Rat).